Reading from the N-terminus, the 246-residue chain is MLVLFVATWSDLGLCKKRPKPGGWNTGGSRYPGQGSPGGNRYPPQGGGGWGQPHGGGWGQPHGGGWGQPHGGGWGQPHGGGWGQGGGTHNQWHKPSKPKTSMKHMAGAAAAGAVVGGLGGYMLGSAMSRPLIHFGNDYEDRYYRENMYRYPNQVYYRPVDQYSNQNNFVHDCVNITIKQHTVTTTTKGENFTETDVKMMERVVEQMCITQYEKESQAYYQRGSSMVLFSSPPVILLISFLIFLIVG.

The signal sequence occupies residues 1–15 (MLVLFVATWSDLGLC). Positions 16–223 (KKRPKPGGWN…ESQAYYQRGS (208 aa)) are interaction with GRB2, ERI3 and SYN1. A disordered region spans residues 18–102 (RPKPGGWNTG…HKPSKPKTSM (85 aa)). Tandem repeats lie at residues 44–52 (PQGGGGWGQ), 53–60 (PHGGGWGQ), 61–68 (PHGGGWGQ), 69–76 (PHGGGWGQ), and 77–84 (PHGGGWGQ). The tract at residues 44 to 84 (PQGGGGWGQPHGGGWGQPHGGGWGQPHGGGWGQPHGGGWGQ) is 5 X 8 AA tandem repeats of P-H-G-G-G-W-G-Q. The span at 45-88 (QGGGGWGQPHGGGWGQPHGGGWGQPHGGGWGQPHGGGWGQGGGT) shows a compositional bias: gly residues. Residues His-54, Gly-55, Gly-56, His-62, Gly-63, Gly-64, His-70, Gly-71, Gly-72, His-78, Gly-79, and Gly-80 each coordinate Cu(2+). The segment covering 91–102 (QWHKPSKPKTSM) has biased composition (basic residues). Cys-172 and Cys-207 are joined by a disulfide. Asn-174 and Asn-190 each carry an N-linked (GlcNAc...) asparagine glycan. Residue Ser-223 is the site of GPI-anchor amidated serine attachment. Residues 224–246 (SMVLFSSPPVILLISFLIFLIVG) constitute a propeptide, removed in mature form.

The protein belongs to the prion family. As to quaternary structure, monomer and homodimer. Has a tendency to aggregate into amyloid fibrils containing a cross-beta spine, formed by a steric zipper of superposed beta-strands. Soluble oligomers may represent an intermediate stage on the path to fibril formation. Copper binding may promote oligomerization. Interacts with GRB2, APP, ERI3/PRNPIP and SYN1. Mislocalized cytosolically exposed PrP interacts with MGRN1; this interaction alters MGRN1 subcellular location and causes lysosomal enlargement. Interacts with KIAA1191.

The protein localises to the cell membrane. Its subcellular location is the golgi apparatus. In terms of biological role, its primary physiological function is unclear. Has cytoprotective activity against internal or environmental stresses. May play a role in neuronal development and synaptic plasticity. May be required for neuronal myelin sheath maintenance. May play a role in iron uptake and iron homeostasis. Soluble oligomers are toxic to cultured neuroblastoma cells and induce apoptosis (in vitro). Association with GPC1 (via its heparan sulfate chains) targets PRNP to lipid rafts. Also provides Cu(2+) or Zn(2+) for the ascorbate-mediated GPC1 deaminase degradation of its heparan sulfate side chains. In Cercopithecus mona (Mona monkey), this protein is Major prion protein (PRNP).